Consider the following 156-residue polypeptide: Small ribosomal subunit protein uS7 (156 aa).

The protein belongs to the universal ribosomal protein uS7 family. As to quaternary structure, part of the 30S ribosomal subunit. Contacts proteins S9 and S11.

Its function is as follows. One of the primary rRNA binding proteins, it binds directly to 16S rRNA where it nucleates assembly of the head domain of the 30S subunit. Is located at the subunit interface close to the decoding center, probably blocks exit of the E-site tRNA. The polypeptide is Small ribosomal subunit protein uS7 (Paraburkholderia phymatum (strain DSM 17167 / CIP 108236 / LMG 21445 / STM815) (Burkholderia phymatum)).